The primary structure comprises 264 residues: Triosephosphate isomerase (264 aa).

13–15 (NWK) serves as a coordination point for substrate. The active-site Electrophile is His106. The active-site Proton acceptor is the Glu179. Substrate is bound by residues Gly185, Ser223, and 244–245 (GG).

This sequence belongs to the triosephosphate isomerase family. In terms of assembly, homodimer.

The protein localises to the cytoplasm. It catalyses the reaction D-glyceraldehyde 3-phosphate = dihydroxyacetone phosphate. The protein operates within carbohydrate biosynthesis; gluconeogenesis. It functions in the pathway carbohydrate degradation; glycolysis; D-glyceraldehyde 3-phosphate from glycerone phosphate: step 1/1. Involved in the gluconeogenesis. Catalyzes stereospecifically the conversion of dihydroxyacetone phosphate (DHAP) to D-glyceraldehyde-3-phosphate (G3P). This Acinetobacter baumannii (strain SDF) protein is Triosephosphate isomerase.